Reading from the N-terminus, the 322-residue chain is Beta-ketoacyl-[acyl-carrier-protein] synthase III (322 aa).

Residues Cys113 and His247 contribute to the active site. The tract at residues 248–252 (QANIR) is ACP-binding. Asn278 is an active-site residue.

It belongs to the thiolase-like superfamily. FabH family. In terms of assembly, homodimer.

The protein resides in the cytoplasm. It carries out the reaction malonyl-[ACP] + acetyl-CoA + H(+) = 3-oxobutanoyl-[ACP] + CO2 + CoA. It functions in the pathway lipid metabolism; fatty acid biosynthesis. Catalyzes the condensation reaction of fatty acid synthesis by the addition to an acyl acceptor of two carbons from malonyl-ACP. Catalyzes the first condensation reaction which initiates fatty acid synthesis and may therefore play a role in governing the total rate of fatty acid production. Possesses both acetoacetyl-ACP synthase and acetyl transacylase activities. Its substrate specificity determines the biosynthesis of branched-chain and/or straight-chain of fatty acids. The polypeptide is Beta-ketoacyl-[acyl-carrier-protein] synthase III (Tropheryma whipplei (strain TW08/27) (Whipple's bacillus)).